The sequence spans 85 residues: Beta-insect depressant toxin Lqh-dprIT3e (85 aa).

The signal sequence occupies residues 1–21 (MKLLLLLTISASMLIEGLVNA). The LCN-type CS-alpha/beta domain occupies 22–82 (DGYIRGGDGC…EWDYETDTCG (61 aa)). Disulfide bonds link cysteine 31–cysteine 81, cysteine 35–cysteine 56, cysteine 42–cysteine 63, and cysteine 46–cysteine 65. A Glycine amide modification is found at glycine 82.

This sequence belongs to the long (4 C-C) scorpion toxin superfamily. Sodium channel inhibitor family. Beta subfamily. In terms of tissue distribution, expressed by the venom gland.

It is found in the secreted. Depressant insect beta-toxins cause a transient contraction paralysis followed by a slow flaccid paralysis. They bind voltage-independently at site-4 of sodium channels (Nav) and block action potentials, primarily by depolarizing the axonal membrane and suppressing the sodium current. This depressant toxin is active only on insects. It is found in a relatively small amount in the venom. The chain is Beta-insect depressant toxin Lqh-dprIT3e from Leiurus hebraeus (Hebrew deathstalker scorpion).